A 294-amino-acid chain; its full sequence is tRNA dimethylallyltransferase (294 aa).

Gly10–Thr17 contributes to the ATP binding site. Thr12 to Thr17 is a binding site for substrate. Positions Asp35–Gln38 are interaction with substrate tRNA.

It belongs to the IPP transferase family. As to quaternary structure, monomer. It depends on Mg(2+) as a cofactor.

The enzyme catalyses adenosine(37) in tRNA + dimethylallyl diphosphate = N(6)-dimethylallyladenosine(37) in tRNA + diphosphate. Catalyzes the transfer of a dimethylallyl group onto the adenine at position 37 in tRNAs that read codons beginning with uridine, leading to the formation of N6-(dimethylallyl)adenosine (i(6)A). The polypeptide is tRNA dimethylallyltransferase (Streptococcus suis (strain 98HAH33)).